A 151-amino-acid polypeptide reads, in one-letter code: Large ribosomal subunit protein uL13 (151 aa).

Belongs to the universal ribosomal protein uL13 family. In terms of assembly, part of the 50S ribosomal subunit.

Its function is as follows. This protein is one of the early assembly proteins of the 50S ribosomal subunit, although it is not seen to bind rRNA by itself. It is important during the early stages of 50S assembly. This is Large ribosomal subunit protein uL13 from Rippkaea orientalis (strain PCC 8801 / RF-1) (Cyanothece sp. (strain PCC 8801)).